A 242-amino-acid polypeptide reads, in one-letter code: Type III pantothenate kinase (242 aa).

6–13 contacts ATP; it reads DAGNTRLK. Substrate is bound by residues Y90 and 97-100; that span reads GADR. D99 functions as the Proton acceptor in the catalytic mechanism. D119 provides a ligand contact to K(+). S122 contributes to the ATP binding site. Residue T174 coordinates substrate.

It belongs to the type III pantothenate kinase family. In terms of assembly, homodimer. Requires NH4(+) as cofactor. The cofactor is K(+).

It localises to the cytoplasm. The catalysed reaction is (R)-pantothenate + ATP = (R)-4'-phosphopantothenate + ADP + H(+). Its pathway is cofactor biosynthesis; coenzyme A biosynthesis; CoA from (R)-pantothenate: step 1/5. Its function is as follows. Catalyzes the phosphorylation of pantothenate (Pan), the first step in CoA biosynthesis. This chain is Type III pantothenate kinase, found in Marinobacter nauticus (strain ATCC 700491 / DSM 11845 / VT8) (Marinobacter aquaeolei).